The sequence spans 224 residues: F420-dependent NADP reductase (224 aa).

Residues 9 to 12 (TGDQ), 31 to 32 (SR), Lys36, Val74, Val100, and Ala145 each bind NADP(+).

Belongs to the F420-dependent NADP reductase family. Homotetramer.

It carries out the reaction reduced coenzyme F420-(gamma-L-Glu)(n) + NADP(+) = oxidized coenzyme F420-(gamma-L-Glu)(n) + NADPH + 2 H(+). Its function is as follows. Catalyzes the reduction of NADP(+) with F420H(2) via hydride transfer, and the reverse reaction, i.e. the reduction of F420 with NADPH. Probably functions in the regeneration of NADPH required in biosynthetic reactions. This Methanothermobacter marburgensis (strain ATCC BAA-927 / DSM 2133 / JCM 14651 / NBRC 100331 / OCM 82 / Marburg) (Methanobacterium thermoautotrophicum) protein is F420-dependent NADP reductase.